We begin with the raw amino-acid sequence, 235 residues long: Cytidylate kinase (235 aa).

An ATP-binding site is contributed by 16–24 (GPAASGKST).

This sequence belongs to the cytidylate kinase family. Type 1 subfamily.

The protein resides in the cytoplasm. The enzyme catalyses CMP + ATP = CDP + ADP. It carries out the reaction dCMP + ATP = dCDP + ADP. In Chloroherpeton thalassium (strain ATCC 35110 / GB-78), this protein is Cytidylate kinase.